Reading from the N-terminus, the 408-residue chain is Imidazolonepropionase (408 aa).

Fe(3+)-binding residues include His-73 and His-75. Residues His-73 and His-75 each contribute to the Zn(2+) site. Residues Arg-82, Tyr-145, and His-178 each coordinate 4-imidazolone-5-propanoate. Tyr-145 contacts N-formimidoyl-L-glutamate. Fe(3+) is bound at residue His-243. His-243 contributes to the Zn(2+) binding site. Residue Gln-246 coordinates 4-imidazolone-5-propanoate. Residue Asp-318 participates in Fe(3+) binding. Asp-318 is a binding site for Zn(2+). The N-formimidoyl-L-glutamate site is built by Asn-320 and Gly-322. Ser-323 contacts 4-imidazolone-5-propanoate.

This sequence belongs to the metallo-dependent hydrolases superfamily. HutI family. Requires Zn(2+) as cofactor. It depends on Fe(3+) as a cofactor.

The protein resides in the cytoplasm. It carries out the reaction 4-imidazolone-5-propanoate + H2O = N-formimidoyl-L-glutamate. Its pathway is amino-acid degradation; L-histidine degradation into L-glutamate; N-formimidoyl-L-glutamate from L-histidine: step 3/3. Functionally, catalyzes the hydrolytic cleavage of the carbon-nitrogen bond in imidazolone-5-propanoate to yield N-formimidoyl-L-glutamate. It is the third step in the universal histidine degradation pathway. The chain is Imidazolonepropionase from Shewanella sp. (strain MR-4).